The sequence spans 114 residues: Probable 4-amino-4-deoxy-L-arabinose-phosphoundecaprenol flippase subunit ArnE (114 aa).

Helical transmembrane passes span Pro41–Leu61, Leu64–Ser84, and Tyr94–Leu114. Residues Gly53–Gly112 enclose the EamA domain.

This sequence belongs to the ArnE family. As to quaternary structure, heterodimer of ArnE and ArnF.

Its subcellular location is the cell inner membrane. Its pathway is bacterial outer membrane biogenesis; lipopolysaccharide biosynthesis. Its function is as follows. Translocates 4-amino-4-deoxy-L-arabinose-phosphoundecaprenol (alpha-L-Ara4N-phosphoundecaprenol) from the cytoplasmic to the periplasmic side of the inner membrane. The polypeptide is Probable 4-amino-4-deoxy-L-arabinose-phosphoundecaprenol flippase subunit ArnE (Aeromonas salmonicida (strain A449)).